Reading from the N-terminus, the 336-residue chain is Probable GTPase MT1543 (336 aa).

GTP contacts are provided by residues 67–75 (GVPGVGKST), D209, and 245–247 (SAV).

The protein belongs to the SIMIBI class G3E GTPase family. ArgK/MeaB subfamily. In terms of assembly, homodimer.

Functionally, probable GTPase. May also bind and hydrolyze ATP. May function as chaperone. This Mycobacterium tuberculosis (strain CDC 1551 / Oshkosh) protein is Probable GTPase MT1543.